A 634-amino-acid chain; its full sequence is Sodium-dependent neutral amino acid transporter B(0)AT1 (634 aa).

Residues 1 to 41 (MVRLVLPNPGLEERIPSLDELEVIEKEEAGSRPKWDNKAQY) are Cytoplasmic-facing. The residue at position 17 (serine 17) is a Phosphoserine. A helical transmembrane segment spans residues 42–62 (MLTCVGFCVGLGNVWRFPYLC). The Extracellular segment spans residues 63 to 67 (QSHGG). The helical transmembrane segment at 68-88 (GAFMIPFLILLVFEGIPLLYL) threads the bilayer. The Cytoplasmic portion of the chain corresponds to 89–119 (EFAIGQRLRKGSMGVWSSIHPALKGIGIASM). Residues 120 to 140 (FVSFMVGLYYNTIIAWVMWYF) form a helical membrane-spanning segment. Residues 141–192 (FNSFQEPLPWSECPLNQNQTGYVEECAKSSSVDYFWYRETLNISTSISDSGS) lie on the Extracellular side of the membrane. N-linked (GlcNAc...) asparagine glycans are attached at residues asparagine 158 and asparagine 182. Residues 193–213 (IQWWILLCLTCAWSVLYVCII) traverse the membrane as a helical segment. The Cytoplasmic segment spans residues 214–221 (RGIETTGK). Residues 222 to 242 (AVYITSTLPYVVLTIFLIRGL) form a helical membrane-spanning segment. Residues 243–268 (TLKGATNGIVFLFTPNITELSNPNTW) are Extracellular-facing. An N-linked (GlcNAc...) asparagine glycan is attached at asparagine 258. Residues 269-289 (LDAGAQVFYSFSLAFGGLISF) form a helical membrane-spanning segment. The Cytoplasmic segment spans residues 290 to 304 (SSYNSVHNNCEMDSV). The chain crosses the membrane as a helical span at residues 305–325 (IVSVINGFTSVYAATVVYSII). Over 326–413 (GFRATERFDD…TEAITKMPVS (88 aa)) the chain is Extracellular. N-linked (GlcNAc...) asparagine glycans are attached at residues asparagine 354 and asparagine 368. A helical transmembrane segment spans residues 414–434 (PLWSVLFFIMLFCLGLSSMFG). At 435–456 (NMEGVVVPLQDLNITPKKWPKE) the chain is on the cytoplasmic side. Residues 457–477 (LLTGLICLGTYLIAFIFTLNS) traverse the membrane as a helical segment. Topologically, residues 478–487 (GQYWLSLLDS) are extracellular. The helical transmembrane segment at 488-508 (FAGSIPLLIIAFCEMFAVVYV) threads the bilayer. At 509–531 (YGVDRFNKDIEFMIGHKPNIFWQ) the chain is on the cytoplasmic side. Residues 532-552 (VTWRVVSPLIMLVIFLFFFVI) traverse the membrane as a helical segment. The Extracellular portion of the chain corresponds to 553–581 (EVNKTLMYSIWDPNYEEFPKSQKIPYPNW). A glycan (N-linked (GlcNAc...) asparagine) is linked at asparagine 555. A helical membrane pass occupies residues 582 to 602 (VYAVVVTVAGVPCLSIPCFAI). Over 603–634 (YKFIRNCCQKSDDHHGLVNTLSTASVNGDLKN) the chain is Cytoplasmic. A Phosphoserine modification is found at serine 627.

Belongs to the sodium:neurotransmitter symporter (SNF) (TC 2.A.22) family. SLC6A19 subfamily. As to quaternary structure, interacts in a tissue-specific manner with ACE2 in small intestine and with CLTRN in the kidney. Interacts with CLTRN; this interaction is required for trafficking of SLC6A19 to the plasma membrane and for its catalytic activation in kidneys. Interacts with ACE2; this interaction is required for trafficking of SLC6A19 to the plasma membrane and for its catalytic activation in intestine. Interacts with ANPEP; the interaction positively regulates its amino acid transporter activity. As to expression, predominantly expressed in kidney and small intestine (at protein level). Expressed in the intestinal brush border (at protein level). Expression not observed in other organs, such as lung, skeletal muscle, brain, liver and pancreas. In kidney, expression is localized in the renal cortex but not in the medulla. Substantial amounts of expression in the proximal tubules. The distal nephron segments and the glomeruli are consistently negative. In the small intestine, expression is exclusively localized in villus enterocytes. High resolution of the hybridization-positive villi reveals a gradient of expression with the highest levels in apical cells. Not detected in crypt cells or in any other cell types of the small intestine.

It localises to the cell membrane. It catalyses the reaction L-alanine(in) + Na(+)(in) = L-alanine(out) + Na(+)(out). The enzyme catalyses L-cysteine(in) + Na(+)(in) = L-cysteine(out) + Na(+)(out). The catalysed reaction is L-glutamine(in) + Na(+)(in) = L-glutamine(out) + Na(+)(out). It carries out the reaction glycine(in) + Na(+)(in) = glycine(out) + Na(+)(out). It catalyses the reaction L-isoleucine(in) + Na(+)(in) = L-isoleucine(out) + Na(+)(out). The enzyme catalyses L-leucine(in) + Na(+)(in) = L-leucine(out) + Na(+)(out). The catalysed reaction is L-methionine(in) + Na(+)(in) = L-methionine(out) + Na(+)(out). It carries out the reaction L-phenylalanine(in) + Na(+)(in) = L-phenylalanine(out) + Na(+)(out). It catalyses the reaction L-serine(in) + Na(+)(in) = L-serine(out) + Na(+)(out). The enzyme catalyses L-tryptophan(in) + Na(+)(in) = L-tryptophan(out) + Na(+)(out). The catalysed reaction is L-tyrosine(in) + Na(+)(in) = L-tyrosine(out) + Na(+)(out). It carries out the reaction L-valine(in) + Na(+)(in) = L-valine(out) + Na(+)(out). Transporter that mediates resorption of neutral amino acids across the apical membrane of renal and intestinal epithelial cells. This uptake is sodium-dependent and chloride-independent. Requires CLTRN in kidney or ACE2 in intestine for cell surface expression and amino acid transporter activity. This is Sodium-dependent neutral amino acid transporter B(0)AT1 (Slc6a19) from Mus musculus (Mouse).